The primary structure comprises 392 residues: B2 bradykinin receptor (392 aa).

The Extracellular portion of the chain corresponds to 1 to 61 (MPCSWKLLGF…EWWSWLNAIQ (61 aa)). N-linked (GlcNAc...) asparagine glycans are attached at residues asparagine 29 and asparagine 40. Residues 62-85 (APFLWVLFLLAALENLFVLSVFFL) traverse the membrane as a helical segment. The Cytoplasmic portion of the chain corresponds to 86–94 (HKNSCTVAE). A helical transmembrane segment spans residues 95 to 119 (IYLGNLAAADLILACGLPFWAITIA). Residues 120–132 (NNFDWVFGEVLCR) are Extracellular-facing. A disulfide bridge connects residues cysteine 131 and cysteine 212. Residues 133 to 154 (VVNTMIYMNLYSSICFLMLVSI) form a helical membrane-spanning segment. Topologically, residues 155-176 (DRYLALVKTMSMGRMRGVRWAK) are cytoplasmic. Tyrosine 157 is modified (phosphotyrosine). Residues 177–199 (LYSLVIWGCTLLLSSPMLVFRTM) form a helical membrane-spanning segment. The Extracellular portion of the chain corresponds to 200-222 (REYSEEGHNVTACVIVYPSRSWE). The N-linked (GlcNAc...) asparagine glycan is linked to asparagine 208. Residues 223-249 (VFTNVLLNLVGFLLPLSVITFCTVRIL) form a helical membrane-spanning segment. Residues 250-268 (QVLRNNEMKKFKEVQTERK) lie on the Cytoplasmic side of the membrane. Residues 269-293 (ATVLVLAVLGLFVLCWVPFQISTFL) traverse the membrane as a helical segment. Residues 294–312 (DTLLRLGVLSGCWDEHAVD) lie on the Extracellular side of the membrane. The chain crosses the membrane as a helical span at residues 313–336 (VITQISSYVAYSNSGLNPLVYVIV). The Cytoplasmic segment spans residues 337-392 (GKRFRKKSREVYRVLCQKGGCMGEPVQMENSMGTLRTSISVERQIHKLQDWAGKKQ). Tyrosine 348 carries the post-translational modification Phosphotyrosine. Cysteine 352 carries the S-palmitoyl cysteine lipid modification. Position 367 is a phosphoserine (serine 367). Threonine 370 is subject to Phosphothreonine. 2 positions are modified to phosphoserine; by GRK6: serine 374 and serine 376.

This sequence belongs to the G-protein coupled receptor 1 family. Bradykinin receptor subfamily. BDKRB2 sub-subfamily. As to quaternary structure, forms a complex with PECAM1 and GNAQ. Interacts with PECAM1.

The protein resides in the cell membrane. Its function is as follows. Receptor for bradykinin. It is associated with G proteins that activate a phosphatidylinositol-calcium second messenger system. The protein is B2 bradykinin receptor (Bdkrb2) of Mus musculus (Mouse).